Here is a 106-residue protein sequence, read N- to C-terminus: Glutaredoxin-1 (106 aa).

At Ala-1 the chain carries N-acetylalanine. The 104-residue stretch at 2–105 (QEFVNSKIQP…ARLKEMGALR (104 aa)) folds into the Glutaredoxin domain. Lys-8 bears the N6-succinyllysine mark. Intrachain disulfides connect Cys-22–Cys-25 and Cys-78–Cys-82.

The protein belongs to the glutaredoxin family.

Its subcellular location is the cytoplasm. In terms of biological role, has a glutathione-disulfide oxidoreductase activity in the presence of NADPH and glutathione reductase. Reduces low molecular weight disulfides and proteins. This is Glutaredoxin-1 (GLRX) from Oryctolagus cuniculus (Rabbit).